The primary structure comprises 409 residues: Elongation factor Tu, chloroplastic (409 aa).

One can recognise a tr-type G domain in the interval 10 to 214 (KPHVNIGTIG…TVDAYIPTPE (205 aa)). A G1 region spans residues 19 to 26 (GHVDHGKT). 19–26 (GHVDHGKT) contacts GTP. Residue Thr-26 participates in Mg(2+) binding. Residues 60–64 (GITIN) are G2. Residues 81 to 84 (DCPG) are G3. GTP-binding positions include 81–85 (DCPGH) and 136–139 (NKED). Residues 136-139 (NKED) are G4. Residues 174-176 (SAL) are G5.

This sequence belongs to the TRAFAC class translation factor GTPase superfamily. Classic translation factor GTPase family. EF-Tu/EF-1A subfamily.

The protein localises to the plastid. It is found in the chloroplast. It catalyses the reaction GTP + H2O = GDP + phosphate + H(+). Functionally, GTP hydrolase that promotes the GTP-dependent binding of aminoacyl-tRNA to the A-site of ribosomes during protein biosynthesis. This is Elongation factor Tu, chloroplastic (tufA) from Pleurastrum terricola (Filamentous green alga).